A 395-amino-acid chain; its full sequence is Accessory Sec system protein translocase subunit SecY2 (395 aa).

The next 10 helical transmembrane spans lie at 13 to 33, 63 to 83, 102 to 122, 128 to 148, 157 to 177, 190 to 210, 239 to 259, 272 to 292, 326 to 346, and 355 to 375; these read VSFS…PLPF, ISIF…IQLL, LMQF…VFAF, GLED…VVWL, VGAS…PNII, WIWL…WLAF, MAAM…LMVG, VFQA…FTFV, LIWI…VFGL, and YAGF…MGGI.

Belongs to the SecY/SEC61-alpha family. SecY2 subfamily. In terms of assembly, component of the accessory SecA2/SecY2 protein translocase complex required to export cell wall proteins. May form heterotrimers with SecE and SecG subunits.

The protein localises to the cell membrane. Its function is as follows. Part of the accessory SecA2/SecY2 system specifically required for export of possible cell wall proteins. The central subunit of a protein translocation channel. This is Accessory Sec system protein translocase subunit SecY2 from Lactobacillus johnsonii (strain CNCM I-12250 / La1 / NCC 533).